A 196-amino-acid chain; its full sequence is Retinol-binding protein 4 (196 aa).

Positions 1 to 21 (MAYTWRALLLLALAFLGSSMA) are cleaved as a signal peptide. 3 disulfides stabilise this stretch: Cys-25-Cys-181, Cys-91-Cys-195, and Cys-141-Cys-150. Gln-119 contacts substrate.

Belongs to the calycin superfamily. Lipocalin family. In terms of assembly, interacts with TTR. Interaction with TTR prevents its loss by filtration through the kidney glomeruli. Interacts with STRA6.

The protein resides in the secreted. In terms of biological role, retinol-binding protein that mediates retinol transport in blood plasma. Delivers retinol from the liver stores to the peripheral tissues. Transfers the bound all-trans retinol to STRA6, that then facilitates retinol transport across the cell membrane. The polypeptide is Retinol-binding protein 4 (RBP4) (Gallus gallus (Chicken)).